A 51-amino-acid polypeptide reads, in one-letter code: Large ribosomal subunit protein bL33 (51 aa).

It belongs to the bacterial ribosomal protein bL33 family.

This chain is Large ribosomal subunit protein bL33, found in Psychrobacter sp. (strain PRwf-1).